Here is a 60-residue protein sequence, read N- to C-terminus: Ixodegrin-Ip (60 aa).

An N-terminal signal peptide occupies residues 1 to 21 (MNAAFIAALFILGALTLDAMA). The Cell attachment site motif lies at 49 to 51 (RGD).

This sequence belongs to the ixodegrin family. In terms of processing, contains 3 disulfide bonds. In terms of tissue distribution, expressed in salivary glands.

It is found in the secreted. Its function is as follows. Tick salivary platelet aggregation inhibitor that plays an important part in the anti-hemostatic strategy of ticks. Inhibits platelet aggregation induced by ADP, thrombin and thromboxane A2 (TXA2). Blocks platelet adhesion to soluble collagen (most probably through the binding to alpha-2/beta-1 integrin (ITGA2/ITGB1)) and binds to purified glycoprotein IIb/IIIa (ITGA2B/ITGB3) in a dose-dependent manner. In vivo, reduces thrombus weight effectively in a rat arteriovenous shunt model and inhibits thrombosis in a carrageenan-induced mouse tail thrombosis model. This Ixodes pacificus (Western black-legged tick) protein is Ixodegrin-Ip.